A 146-amino-acid polypeptide reads, in one-letter code: FAD synthase (146 aa).

ATP is bound by residues T9–F10, H14–H17, and D92.

The protein belongs to the archaeal FAD synthase family. As to quaternary structure, homodimer. A divalent metal cation serves as cofactor.

The catalysed reaction is FMN + ATP + H(+) = FAD + diphosphate. The protein operates within cofactor biosynthesis; FAD biosynthesis; FAD from FMN: step 1/1. Its function is as follows. Catalyzes the transfer of the AMP portion of ATP to flavin mononucleotide (FMN) to produce flavin adenine dinucleotide (FAD) coenzyme. The sequence is that of FAD synthase from Halobacterium salinarum (strain ATCC 29341 / DSM 671 / R1).